Consider the following 833-residue polypeptide: Serine-rich coiled-coil domain-containing protein 2 (833 aa).

The tract at residues 178–208 (NRSSGNVQKPRVNSCASRSSSGESLAQSPDN) is disordered. Residues 191–208 (SCASRSSSGESLAQSPDN) show a composition bias toward polar residues. Ser-222 is subject to Phosphoserine. Disordered regions lie at residues 321–345 (LLKSSRPPFSGPMTVDSNKNPPADM), 424–452 (NRTRITPEEMTLKEEKHESRPSKDIFDSP), 478–508 (KHTSGNNLISPDTDYRAGSSFELSPSDSSDG), and 602–631 (DHYHLSHPGHYHHHGQSDLSRGSPYRESPL). Ser-451 carries the post-translational modification Phosphoserine. A compositionally biased stretch (low complexity) spans 496–506 (SSFELSPSDSS). Positions 606 to 615 (LSHPGHYHHH) are enriched in basic residues. A coiled-coil region spans residues 711–747 (DQIYKNEDLLNEITQLKEEIKKKDEKIQLLEQQLATR). Residues 789 to 833 (FQGMPRTVPPHRRQTSSTTAFQQPSQIYRPRPGKTNKATTYRGPQ) form a disordered region. Residues 803 to 814 (TSSTTAFQQPSQ) show a composition bias toward polar residues.

Belongs to the CCSER family. In terms of tissue distribution, expressed in brain (at protein level).

Its subcellular location is the cytoplasm. It localises to the cytoskeleton. Microtubule-binding protein which might play a role in microtubule bundling. The sequence is that of Serine-rich coiled-coil domain-containing protein 2 (Ccser2) from Mus musculus (Mouse).